The sequence spans 254 residues: MGRVIRNQRKGAGSIFTSHTRLRQGAAKLRTLDYAERHGYIRGVVKQIVHDAGRGAPLAKVVFRDPYKYKLREEIFIANEGVHTGQFIYAGKKASLNVGNVLPLGSVPEGTIVSNVEEKPGDRGALARASGNYVIIIGHNPDENKTRVRLPSGAKKIISSDARGVIGVIAGGGRTDKPLLKAGRAFHKYKLKRNSWPKTRGVAMNPVDHPHGGGNHQHIGKASTISRGAVSGQKAGLIAARRTGLLRGSQKTQD.

This sequence belongs to the universal ribosomal protein uL2 family.

The chain is Large ribosomal subunit protein uL2 (RPL2) from Candida glabrata (strain ATCC 2001 / BCRC 20586 / JCM 3761 / NBRC 0622 / NRRL Y-65 / CBS 138) (Yeast).